Reading from the N-terminus, the 300-residue chain is Cutinase est2 (300 aa).

A signal peptide spans 1 to 39 (MSVTTPRRETSLLSRALRATAAAATAVVATVALAAPAQA). Position 99 (Tyr-99) interacts with poly(ethylene terephthalate). The Nucleophile role is filled by Ser-169. Poly(ethylene terephthalate) contacts are provided by Met-170 and Trp-194. Glu-213 provides a ligand contact to Ca(2+). Asp-215 functions as the Charge relay system in the catalytic mechanism. Residue Asp-243 participates in Ca(2+) binding. The active-site Charge relay system is His-247. Cys-280 and Cys-298 form a disulfide bridge. Residue Glu-292 coordinates Ca(2+).

The protein belongs to the AB hydrolase superfamily. In terms of assembly, monomer. Ca(2+) is required as a cofactor.

The protein resides in the secreted. The protein localises to the periplasm. The catalysed reaction is an acetyl ester + H2O = an aliphatic alcohol + acetate + H(+). It carries out the reaction (ethylene terephthalate)(n) + H2O = (ethylene terephthalate)(n-1) + 4-[(2-hydroxyethoxy)carbonyl]benzoate + H(+). The enzyme catalyses a butanoate ester + H2O = an aliphatic alcohol + butanoate + H(+). It catalyses the reaction cutin + H2O = cutin monomers.. The catalysed reaction is a hexanoate ester + H2O = an aliphatic alcohol + hexanoate + H(+). It carries out the reaction an octanoate ester + H2O = an aliphatic alcohol + octanoate + H(+). With respect to regulation, activated by calcium ions. Activated by magnesium ions. Activated by manganese ions. Inhibited by the serine hydrolase inhibitor phenylmethanesulfonyl fluoride (PMSF). Inhibited by the chelator ethylenediaminetetraacetic acid (EDTA). Inhibited by iron ions. Inhibited by aluminum ions. Inhibited by rubidium ions. Inhibited by lithium ions. In terms of biological role, catalyzes the hydrolysis of cutin, a polyester that forms the structure of plant cuticle. Shows esterase activity towards p-nitrophenol-linked aliphatic esters (pNP-aliphatic esters). Capable of degrading the plastic poly(ethylene terephthalate) (PET), the most abundant polyester plastic in the world. Can also depolymerize the synthetic polyesters poly(epsilon-caprolactone) (PCL), poly(butylene succinate-co-adipate) (PBSA), poly(butylene succinate) (PBS), and poly(lactic acid) (PLA). In Thermobifida alba (Thermomonospora alba), this protein is Cutinase est2.